Reading from the N-terminus, the 109-residue chain is Large ribosomal subunit protein uL23 (109 aa).

It belongs to the universal ribosomal protein uL23 family. In terms of assembly, part of the 50S ribosomal subunit. Contacts protein L29, and trigger factor when it is bound to the ribosome.

Its function is as follows. One of the early assembly proteins it binds 23S rRNA. One of the proteins that surrounds the polypeptide exit tunnel on the outside of the ribosome. Forms the main docking site for trigger factor binding to the ribosome. The sequence is that of Large ribosomal subunit protein uL23 from Aquifex pyrophilus.